The sequence spans 336 residues: Abasic site processing protein HMCES (336 aa).

Residue Cys2 is the Nucleophile of the active site. Position 2 is a thiazolidine linkage to a ring-opened DNA abasic site (Cys2). Residues Arg26–Asn51 are disordered. Polar residues predominate over residues Tyr40–Asn51. Glu129 is a catalytic residue. A disordered region spans residues Gln285–Lys336. Residues Leu322–Lys336 show a composition bias toward basic and acidic residues.

Belongs to the SOS response-associated peptidase family. In terms of processing, ubiquitination of the hmces DNA-protein cross-link by rfwd3 may promotes its degradation.

The protein resides in the chromosome. Formation and reversal of DNA-protein cross-link depends on DNA context. Catalyzes formation of the thiazolidine linkage in presence of abasic sites in single-stranded DNA. Mediates the reversal of the thiazolidine cross-link in presence of double stranded DNA. Its function is as follows. Sensor of abasic sites in single-stranded DNA (ssDNA) required to preserve genome integrity by promoting error-free repair of abasic sites. Acts as an enzyme that recognizes and binds abasic sites in ssDNA at replication forks and chemically modifies the lesion by forming a covalent cross-link with DNA: forms a stable thiazolidine linkage between a ring-opened abasic site and the alpha-amino and sulfhydryl substituents of its N-terminal catalytic cysteine residue. The hmces DNA-protein cross-link is then either reversed or degraded. Hmces is able to catalyze the reversal of its thiazolidine cross-link and cycle between a cross-link and a non-cross-linked state depending on DNA context: mediates self-reversal of the thiazolidine cross-link in double stranded DNA, allowing apex1 to initiate downstream repair of abasic sites. The hmces DNA-protein cross-link can also be degraded by the sprtn metalloprotease following unfolding by the brip1/fancj helicase. Promotes error-free repair of abasic sites by protecting abasic sites from translesion synthesis (TLS) polymerases and endonucleases that are error-prone and would generate mutations and double-strand breaks. Acts as a protease: mediates autocatalytic processing of its N-terminal methionine in order to expose the catalytic cysteine. The HMCES DNA-protein cross-link is then either reversed or degraded. According to a model, the HMCES DNA-protein cross-link. The polypeptide is Abasic site processing protein HMCES (Xenopus laevis (African clawed frog)).